The primary structure comprises 704 residues: Elongation factor G (704 aa).

The tr-type G domain occupies 8 to 291 (DRVRNIGIMA…AVIDYLASPV (284 aa)). Residues 17-24 (AHIDAGKT), 90-94 (DTPGH), and 144-147 (NKMD) each bind GTP.

Belongs to the TRAFAC class translation factor GTPase superfamily. Classic translation factor GTPase family. EF-G/EF-2 subfamily.

It is found in the cytoplasm. Functionally, catalyzes the GTP-dependent ribosomal translocation step during translation elongation. During this step, the ribosome changes from the pre-translocational (PRE) to the post-translocational (POST) state as the newly formed A-site-bound peptidyl-tRNA and P-site-bound deacylated tRNA move to the P and E sites, respectively. Catalyzes the coordinated movement of the two tRNA molecules, the mRNA and conformational changes in the ribosome. This Chlorobaculum tepidum (strain ATCC 49652 / DSM 12025 / NBRC 103806 / TLS) (Chlorobium tepidum) protein is Elongation factor G.